The primary structure comprises 274 residues: MDLVMLIKAAILGLVEGITEFLPISSTGHLIIAGSLLDFLDEQKRDVFVIVIQLGAILAVCWEYRRRLTDVVAGLGSDPQSWKFVTNLLIAFLPAVVLGLTFGKAIKAHLFSPVPVATAFIVGGLVILWAERRRHPIRVREVDEMTWVDALKIGLAQCFALIPGTSRSGATIIGGLFFGLSRKAATEFSFFLAIPTLTAASLYDLYKNRALLDGDMSGLMAVGFVVSFLSALVAVRGLIRYISRHDFTVFAWYRIAFGLVVLATAWSGLVSWSA.

A run of 6 helical transmembrane segments spans residues 47–64 (VFVI…CWEY), 82–102 (WKFV…GLTF), 110–130 (LFSP…ILWA), 185–205 (ATEF…LYDL), 219–239 (LMAV…RGLI), and 249–269 (VFAW…WSGL).

Belongs to the UppP family.

The protein localises to the cell inner membrane. It catalyses the reaction di-trans,octa-cis-undecaprenyl diphosphate + H2O = di-trans,octa-cis-undecaprenyl phosphate + phosphate + H(+). Its function is as follows. Catalyzes the dephosphorylation of undecaprenyl diphosphate (UPP). Confers resistance to bacitracin. In Rhodospirillum rubrum (strain ATCC 11170 / ATH 1.1.1 / DSM 467 / LMG 4362 / NCIMB 8255 / S1), this protein is Undecaprenyl-diphosphatase 2.